Reading from the N-terminus, the 118-residue chain is Ribonuclease P protein component (118 aa).

The protein belongs to the RnpA family. As to quaternary structure, consists of a catalytic RNA component (M1 or rnpB) and a protein subunit.

It carries out the reaction Endonucleolytic cleavage of RNA, removing 5'-extranucleotides from tRNA precursor.. Its function is as follows. RNaseP catalyzes the removal of the 5'-leader sequence from pre-tRNA to produce the mature 5'-terminus. It can also cleave other RNA substrates such as 4.5S RNA. The protein component plays an auxiliary but essential role in vivo by binding to the 5'-leader sequence and broadening the substrate specificity of the ribozyme. This Vibrio vulnificus (strain CMCP6) protein is Ribonuclease P protein component.